The sequence spans 415 residues: uncharacterized protein (415 aa).

Cysteine 66, cysteine 72, cysteine 75, and cysteine 149 together coordinate [4Fe-4S] cluster. Residues glutamine 249, phenylalanine 276, glutamate 296, and aspartate 344 each contribute to the S-adenosyl-L-methionine site. Cysteine 370 (nucleophile) is an active-site residue.

Belongs to the class I-like SAM-binding methyltransferase superfamily. RNA M5U methyltransferase family.

This is an uncharacterized protein from Brucella suis biovar 1 (strain 1330).